The sequence spans 316 residues: Thymidylate synthase (316 aa).

DUMP contacts are provided by residues arginine 23 and 178–179 (RR). Cysteine 198 (nucleophile) is an active-site residue. DUMP-binding positions include 218-221 (RSAD), asparagine 229, and 259-261 (HIY). Aspartate 221 contributes to the (6R)-5,10-methylene-5,6,7,8-tetrahydrofolate binding site. Position 315 (alanine 315) interacts with (6R)-5,10-methylene-5,6,7,8-tetrahydrofolate.

The protein belongs to the thymidylate synthase family. Bacterial-type ThyA subfamily. Homodimer.

The protein resides in the cytoplasm. It catalyses the reaction dUMP + (6R)-5,10-methylene-5,6,7,8-tetrahydrofolate = 7,8-dihydrofolate + dTMP. Its pathway is pyrimidine metabolism; dTTP biosynthesis. Functionally, catalyzes the reductive methylation of 2'-deoxyuridine-5'-monophosphate (dUMP) to 2'-deoxythymidine-5'-monophosphate (dTMP) while utilizing 5,10-methylenetetrahydrofolate (mTHF) as the methyl donor and reductant in the reaction, yielding dihydrofolate (DHF) as a by-product. This enzymatic reaction provides an intracellular de novo source of dTMP, an essential precursor for DNA biosynthesis. The chain is Thymidylate synthase from Levilactobacillus brevis (strain ATCC 367 / BCRC 12310 / CIP 105137 / JCM 1170 / LMG 11437 / NCIMB 947 / NCTC 947) (Lactobacillus brevis).